Reading from the N-terminus, the 162-residue chain is 18.5 kDa class IV heat shock protein (162 aa).

Residues 53–149 enclose the sHSP domain; the sequence is TSSSTVNTQL…PPQLPEIEEN (97 aa).

It belongs to the small heat shock protein (HSP20) family. As to quaternary structure, may form oligomeric structures.

The protein resides in the cytoplasm. This Arabidopsis thaliana (Mouse-ear cress) protein is 18.5 kDa class IV heat shock protein (HSP18.5).